A 198-amino-acid chain; its full sequence is Peroxiredoxin-2 (198 aa).

The residue at position 2 (A2) is an N-acetylalanine. The region spanning A6 to Y164 is the Thioredoxin domain. S11 bears the Phosphoserine mark. The active-site Cysteine sulfenic acid (-SOH) intermediate is C51. Position 112 is a phosphoserine (S112). T182 is modified (phosphothreonine). At K196 the chain carries N6-acetyllysine.

The protein belongs to the peroxiredoxin family. AhpC/Prx1 subfamily. Homodimer; disulfide-linked, upon oxidation. 5 homodimers assemble to form a ring-like decamer. Interacts with TIPIN. Post-translationally, the enzyme can be inactivated by further oxidation of the cysteine sulfenic acid (C(P)-SOH) to sulphinic acid (C(P)-SO2H) instead of its condensation to a disulfide bond. It can be reactivated by forming a transient disulfide bond with sulfiredoxin SRXN1, which reduces the cysteine sulfinic acid in an ATP- and Mg-dependent manner. Acetylation increases resistance to transition to high molecular-mass complexes. Deacetylated by HDAC6 which decreases reducing activity. Widely expressed with highest levels in bone marrow. High levels also found in heart, brain, kidney and skeletal muscle. Lower levels in liver, lung and thymus.

The protein localises to the cytoplasm. The catalysed reaction is a hydroperoxide + [thioredoxin]-dithiol = an alcohol + [thioredoxin]-disulfide + H2O. Its function is as follows. Thiol-specific peroxidase that catalyzes the reduction of hydrogen peroxide and organic hydroperoxides to water and alcohols, respectively. Plays a role in cell protection against oxidative stress by detoxifying peroxides and as sensor of hydrogen peroxide-mediated signaling events. Might participate in the signaling cascades of growth factors and tumor necrosis factor-alpha by regulating the intracellular concentrations of H(2)O(2). This is Peroxiredoxin-2 (Prdx2) from Mus musculus (Mouse).